A 205-amino-acid chain; its full sequence is Mitotic spindle assembly checkpoint protein MAD2A (205 aa).

Ala2 is subject to N-acetylalanine. Residues Arg14–Val197 enclose the HORMA domain. Phosphoserine occurs at positions 130, 170, 185, and 195. The required for assuming the closed conformation and for interaction with CDC20 stretch occupies residues Ser195–Asp205.

Belongs to the MAD2 family. Monomer and homodimer. Heterodimerizes with MAD2L1 in order to form a tetrameric MAD1L1-MAD2L1 core complex. In the closed and open conformation, interacts with MAD1L1. Formation of a heterotetrameric core complex containing two molecules each of MAD1L1 and of MAD2L1 promotes binding of another molecule of MAD2L1 to each MAD2L1, resulting in a heterohexamer. Interacts with MAD2L1BP. Interacts with ADAM17/TACE. Interacts with CDC20. Dimeric MAD2L1 in the closed conformation interacts with CDC20. Monomeric MAD2L1 in the open conformation does not interact with CDC20. CDC20 competes with MAD1L1 for MAD2L1 binding. In the closed conformation, interacts with BUB1B. Interacts with TTK. Interacts with TPR. Binds to UBD (via ubiquitin-like 1 domain) during mitosis. Interacts with isoform 1 and isoform 2 of NEK2. Interacts with HSF1; this interaction occurs in mitosis. Post-translationally, phosphorylated on multiple serine residues. The level of phosphorylation varies during the cell cycle and is highest during mitosis. Phosphorylation abolishes interaction with MAD1L1 and reduces interaction with CDC20. Phosphorylated by NEK2.

It localises to the nucleus. Its subcellular location is the chromosome. The protein localises to the centromere. It is found in the kinetochore. The protein resides in the cytoplasm. It localises to the cytoskeleton. Its subcellular location is the spindle pole. Its function is as follows. Component of the spindle-assembly checkpoint that prevents the onset of anaphase until all chromosomes are properly aligned at the metaphase plate. In the closed conformation (C-MAD2) forms a heterotetrameric complex with MAD1L1 at unattached kinetochores during prometaphase, and recruits an open conformation of MAD2L1 (O-MAD2) which then promotes the conversion of O-MAD2 to C-MAD2. Required for the execution of the mitotic checkpoint which monitors the process of kinetochore-spindle attachment and inhibits the activity of the anaphase promoting complex by sequestering CDC20 until all chromosomes are aligned at the metaphase plate. The protein is Mitotic spindle assembly checkpoint protein MAD2A (Mad2l1) of Mus musculus (Mouse).